A 56-amino-acid chain; its full sequence is Photosystem II reaction center protein K (56 aa).

Positions 1-19 are excised as a propeptide; that stretch reads MFNIFLDDAFIHSNNPFFG. A helical membrane pass occupies residues 35–55; the sequence is MPIIPVLSFLLAFVWQAAVSF.

This sequence belongs to the PsbK family. In terms of assembly, PSII is composed of 1 copy each of membrane proteins PsbA, PsbB, PsbC, PsbD, PsbE, PsbF, PsbH, PsbI, PsbJ, PsbK, PsbL, PsbM, PsbT, PsbX, PsbY, PsbZ, Psb30/Ycf12, at least 3 peripheral proteins of the oxygen-evolving complex and a large number of cofactors. It forms dimeric complexes.

The protein localises to the plastid. It localises to the chloroplast thylakoid membrane. One of the components of the core complex of photosystem II (PSII). PSII is a light-driven water:plastoquinone oxidoreductase that uses light energy to abstract electrons from H(2)O, generating O(2) and a proton gradient subsequently used for ATP formation. It consists of a core antenna complex that captures photons, and an electron transfer chain that converts photonic excitation into a charge separation. This Pinus thunbergii (Japanese black pine) protein is Photosystem II reaction center protein K.